The sequence spans 376 residues: Deoxyguanosinetriphosphate triphosphohydrolase-like protein (376 aa).

Residues 62-198 (RLTHSLEVSA…AALADDISYI (137 aa)) enclose the HD domain.

Belongs to the dGTPase family. Type 2 subfamily.

This chain is Deoxyguanosinetriphosphate triphosphohydrolase-like protein, found in Rickettsia canadensis (strain McKiel).